The chain runs to 525 residues: GMP synthase [glutamine-hydrolyzing] (525 aa).

The region spanning P16 to R205 is the Glutamine amidotransferase type-1 domain. The Nucleophile role is filled by C93. Active-site residues include H179 and E181. Residues W206–R399 form the GMPS ATP-PPase domain. S233–A239 lines the ATP pocket.

In terms of assembly, homodimer.

The catalysed reaction is XMP + L-glutamine + ATP + H2O = GMP + L-glutamate + AMP + diphosphate + 2 H(+). It functions in the pathway purine metabolism; GMP biosynthesis; GMP from XMP (L-Gln route): step 1/1. Catalyzes the synthesis of GMP from XMP. This chain is GMP synthase [glutamine-hydrolyzing], found in Mycobacterium marinum (strain ATCC BAA-535 / M).